The following is a 264-amino-acid chain: Thymidylate synthase (264 aa).

Arg21 is a binding site for dUMP. His51 lines the (6R)-5,10-methylene-5,6,7,8-tetrahydrofolate pocket. 126–127 (RR) serves as a coordination point for dUMP. The active-site Nucleophile is the Cys146. DUMP is bound by residues 166-169 (RSGD), Asn177, and 207-209 (HLY). Asp169 is a (6R)-5,10-methylene-5,6,7,8-tetrahydrofolate binding site. Position 263 (Ala263) interacts with (6R)-5,10-methylene-5,6,7,8-tetrahydrofolate.

This sequence belongs to the thymidylate synthase family. Bacterial-type ThyA subfamily. In terms of assembly, homodimer.

It localises to the cytoplasm. The catalysed reaction is dUMP + (6R)-5,10-methylene-5,6,7,8-tetrahydrofolate = 7,8-dihydrofolate + dTMP. The protein operates within pyrimidine metabolism; dTTP biosynthesis. Catalyzes the reductive methylation of 2'-deoxyuridine-5'-monophosphate (dUMP) to 2'-deoxythymidine-5'-monophosphate (dTMP) while utilizing 5,10-methylenetetrahydrofolate (mTHF) as the methyl donor and reductant in the reaction, yielding dihydrofolate (DHF) as a by-product. This enzymatic reaction provides an intracellular de novo source of dTMP, an essential precursor for DNA biosynthesis. The sequence is that of Thymidylate synthase from Xanthomonas campestris pv. campestris (strain 8004).